The following is an 875-amino-acid chain: Alanine--tRNA ligase (875 aa).

Zn(2+) is bound by residues histidine 562, histidine 566, cysteine 665, and histidine 669.

It belongs to the class-II aminoacyl-tRNA synthetase family. It depends on Zn(2+) as a cofactor.

It localises to the cytoplasm. It carries out the reaction tRNA(Ala) + L-alanine + ATP = L-alanyl-tRNA(Ala) + AMP + diphosphate. In terms of biological role, catalyzes the attachment of alanine to tRNA(Ala) in a two-step reaction: alanine is first activated by ATP to form Ala-AMP and then transferred to the acceptor end of tRNA(Ala). Also edits incorrectly charged Ser-tRNA(Ala) and Gly-tRNA(Ala) via its editing domain. This chain is Alanine--tRNA ligase, found in Saccharophagus degradans (strain 2-40 / ATCC 43961 / DSM 17024).